Consider the following 592-residue polypeptide: V-type ATP synthase alpha chain (592 aa).

232 to 239 (GPFGSGKT) serves as a coordination point for ATP.

This sequence belongs to the ATPase alpha/beta chains family.

It carries out the reaction ATP + H2O + 4 H(+)(in) = ADP + phosphate + 5 H(+)(out). In terms of biological role, produces ATP from ADP in the presence of a proton gradient across the membrane. The V-type alpha chain is a catalytic subunit. The sequence is that of V-type ATP synthase alpha chain from Clostridioides difficile (strain 630) (Peptoclostridium difficile).